A 1803-amino-acid chain; its full sequence is Pyruvate dehydrogenase [NADP(+)], mitochondrial (1803 aa).

Residues 1 to 37 constitute a mitochondrion transit peptide; it reads MKQSVRPIISNVLRKEVALYSTIIGQDKGKEPTGRTY. 2 4Fe-4S ferredoxin-type domains span residues 747 to 776 and 802 to 831; these read FIPQWIPANCTQCNYCSYVCPHATIRPFVL and FRIQVAPEDCTGCQVCVETCPDDALEMTDA. 8 residues coordinate [4Fe-4S] cluster: Cys-756, Cys-759, Cys-762, Cys-766, Cys-811, Cys-814, Cys-817, and Cys-821. Positions 1248-1391 constitute a Flavodoxin-like domain; that stretch reads VTILYGSETG…GFNNWIPSVW (144 aa). The 226-residue stretch at 1425 to 1650 folds into the FAD-binding FR-type domain; the sequence is KSTPVLSITG…IHPTAMEFPD (226 aa). FAD is bound by residues 1458–1469 and 1585–1595; these read YQVGDSLGVFPE and IKPRYYSISSA.

This sequence in the N-terminal section; belongs to the pyruvate:ferredoxin/flavodoxin oxidoreductase family. In terms of assembly, homodimer. The cofactor is FAD. FMN serves as cofactor. Requires thiamine diphosphate as cofactor. It depends on iron-sulfur cluster as a cofactor.

It is found in the mitochondrion. The catalysed reaction is pyruvate + NADP(+) + CoA = acetyl-CoA + CO2 + NADPH. Its function is as follows. Pyruvate dehydrogenase [NADP(+)] is one of three enzymes participating in respiratory metabolism. The enzyme is also active with 2-oxobutyrate and oxaloacetate. The enzyme is oxygen sensitive. The sequence is that of Pyruvate dehydrogenase [NADP(+)], mitochondrial (PNO) from Euglena gracilis.